Consider the following 495-residue polypeptide: Cobyric acid synthase (495 aa).

Residues 250–444 (SLKISILRLP…LHGLFDNGAW (195 aa)) enclose the GATase cobBQ-type domain. C331 serves as the catalytic Nucleophile. Residue H436 is part of the active site.

The protein belongs to the CobB/CobQ family. CobQ subfamily.

The protein operates within cofactor biosynthesis; adenosylcobalamin biosynthesis. Functionally, catalyzes amidations at positions B, D, E, and G on adenosylcobyrinic A,C-diamide. NH(2) groups are provided by glutamine, and one molecule of ATP is hydrogenolyzed for each amidation. The polypeptide is Cobyric acid synthase (Rippkaea orientalis (strain PCC 8801 / RF-1) (Cyanothece sp. (strain PCC 8801))).